The chain runs to 113 residues: T cell receptor alpha variable 8-1 (113 aa).

Residues 1-20 form the signal peptide; the sequence is MLLLLIPVLGMIFALRDARA. In terms of domain architecture, Ig-like spans 21 to 113; it reads QSVSQHNHHV…DTAEYFCAVN (93 aa). A disulfide bridge connects residues Cys42 and Cys110. N-linked (GlcNAc...) asparagine glycosylation is present at Asn43.

In terms of assembly, alpha-beta TR is a heterodimer composed of an alpha and beta chain; disulfide-linked. The alpha-beta TR is associated with the transmembrane signaling CD3 coreceptor proteins to form the TR-CD3 (TcR or TCR). The assembly of alpha-beta TR heterodimers with CD3 occurs in the endoplasmic reticulum where a single alpha-beta TR heterodimer associates with one CD3D-CD3E heterodimer, one CD3G-CD3E heterodimer and one CD247 homodimer forming a stable octameric structure. CD3D-CD3E and CD3G-CD3E heterodimers preferentially associate with TR alpha and TR beta chains, respectively. The association of the CD247 homodimer is the last step of TcR assembly in the endoplasmic reticulum and is required for transport to the cell surface.

It localises to the cell membrane. Functionally, v region of the variable domain of T cell receptor (TR) alpha chain that participates in the antigen recognition. Alpha-beta T cell receptors are antigen specific receptors which are essential to the immune response and are present on the cell surface of T lymphocytes. Recognize peptide-major histocompatibility (MH) (pMH) complexes that are displayed by antigen presenting cells (APC), a prerequisite for efficient T cell adaptive immunity against pathogens. Binding of alpha-beta TR to pMH complex initiates TR-CD3 clustering on the cell surface and intracellular activation of LCK that phosphorylates the ITAM motifs of CD3G, CD3D, CD3E and CD247 enabling the recruitment of ZAP70. In turn ZAP70 phosphorylates LAT, which recruits numerous signaling molecules to form the LAT signalosome. The LAT signalosome propagates signal branching to three major signaling pathways, the calcium, the mitogen-activated protein kinase (MAPK) kinase and the nuclear factor NF-kappa-B (NF-kB) pathways, leading to the mobilization of transcription factors that are critical for gene expression and essential for T cell growth and differentiation. The T cell repertoire is generated in the thymus, by V-(D)-J rearrangement. This repertoire is then shaped by intrathymic selection events to generate a peripheral T cell pool of self-MH restricted, non-autoaggressive T cells. Post-thymic interaction of alpha-beta TR with the pMH complexes shapes TR structural and functional avidity. The protein is T cell receptor alpha variable 8-1 of Homo sapiens (Human).